Here is a 507-residue protein sequence, read N- to C-terminus: Aromatase (507 aa).

A heme-binding site is contributed by Cys436.

The protein belongs to the cytochrome P450 family. Heme is required as a cofactor.

The protein resides in the membrane. The catalysed reaction is testosterone + 3 reduced [NADPH--hemoprotein reductase] + 3 O2 = 17beta-estradiol + formate + 3 oxidized [NADPH--hemoprotein reductase] + 4 H2O + 4 H(+). It catalyses the reaction androst-4-ene-3,17-dione + 3 reduced [NADPH--hemoprotein reductase] + 3 O2 = estrone + formate + 3 oxidized [NADPH--hemoprotein reductase] + 4 H2O + 4 H(+). Functionally, catalyzes the formation of aromatic C18 estrogens from C19 androgens. This Gallus gallus (Chicken) protein is Aromatase (CYP19A1).